Reading from the N-terminus, the 488-residue chain is Aspartyl/glutamyl-tRNA(Asn/Gln) amidotransferase subunit B (488 aa).

Belongs to the GatB/GatE family. GatB subfamily. Heterotrimer of A, B and C subunits.

The enzyme catalyses L-glutamyl-tRNA(Gln) + L-glutamine + ATP + H2O = L-glutaminyl-tRNA(Gln) + L-glutamate + ADP + phosphate + H(+). It carries out the reaction L-aspartyl-tRNA(Asn) + L-glutamine + ATP + H2O = L-asparaginyl-tRNA(Asn) + L-glutamate + ADP + phosphate + 2 H(+). In terms of biological role, allows the formation of correctly charged Asn-tRNA(Asn) or Gln-tRNA(Gln) through the transamidation of misacylated Asp-tRNA(Asn) or Glu-tRNA(Gln) in organisms which lack either or both of asparaginyl-tRNA or glutaminyl-tRNA synthetases. The reaction takes place in the presence of glutamine and ATP through an activated phospho-Asp-tRNA(Asn) or phospho-Glu-tRNA(Gln). In Ralstonia nicotianae (strain ATCC BAA-1114 / GMI1000) (Ralstonia solanacearum), this protein is Aspartyl/glutamyl-tRNA(Asn/Gln) amidotransferase subunit B.